We begin with the raw amino-acid sequence, 326 residues long: Tetraacyldisaccharide 4'-kinase (326 aa).

Residue 55 to 62 (TAGGNGKT) coordinates ATP.

It belongs to the LpxK family.

The catalysed reaction is a lipid A disaccharide + ATP = a lipid IVA + ADP + H(+). It participates in glycolipid biosynthesis; lipid IV(A) biosynthesis; lipid IV(A) from (3R)-3-hydroxytetradecanoyl-[acyl-carrier-protein] and UDP-N-acetyl-alpha-D-glucosamine: step 6/6. Transfers the gamma-phosphate of ATP to the 4'-position of a tetraacyldisaccharide 1-phosphate intermediate (termed DS-1-P) to form tetraacyldisaccharide 1,4'-bis-phosphate (lipid IVA). This is Tetraacyldisaccharide 4'-kinase from Serratia proteamaculans (strain 568).